The primary structure comprises 124 residues: UPF0212 protein Hlac_0869 (124 aa).

Belongs to the UPF0212 family.

This is UPF0212 protein Hlac_0869 from Halorubrum lacusprofundi (strain ATCC 49239 / DSM 5036 / JCM 8891 / ACAM 34).